A 376-amino-acid polypeptide reads, in one-letter code: MKKELKILIIANIALLISIIHYTFDLLTLCIDDTSKDALTDEQLNPPNGFNSTFYESPPQLIPKIIHQTYKTNDIPEQWVKGRQKCIDLHPDYTYILWTDEMSDTFIKQEYPWFLDTFRSYEYPIERADAIRYFILSHYGGIYIDLDDGCERRLDPLLKVPAFLRKTSPTGVSNDVMGSVPRHPFFLKVIKSLKHYKKNWYIPYMTIMGSTGPLFISVVWKQYKRWSNTAENGAVRILQPADYKMHNNSFFSISKGSSWHTGDANFMKTLENHILSCVVTGFIFGFFILYGEFTFYTWLCSGPFNNKRYYIQWLSDKFKLHKWKLTSSYKNKEKRRNPTRHEYNSRGKRLRKDSNIPYDSVFLDIEKNHAKFTDLT.

Helical transmembrane passes span 7 to 27 and 274 to 294; these read ILII…FDLL and ILSC…GEFT. The segment at 331 to 351 is disordered; it reads NKEKRRNPTRHEYNSRGKRLR. Position 354 is a phosphoserine (Ser-354).

It belongs to the glycosyltransferase 32 family. As to quaternary structure, heterodimer of CSH1 and CSG2.

The protein resides in the vacuole membrane. The enzyme catalyses a 1D-myo-inositol-1-phospho-N-[(R)-2-hydroxy-very-long-chain fatty acyl]-(R)-4-hydroxysphingoid base + GDP-alpha-D-mannose = an alpha-D-mannosyl-(1&lt;-&gt;6)-1D-myo-inositol-1-phospho-N-[(R)-2-hydroxy-very-long-chain fatty acyl]-(R)-4-hydroxysphingoid base + GDP + H(+). Its function is as follows. Involved in the synthesis of mannosyl phosphorylinositol ceramide. Catalyzes the addition of mannosyl to phosphorylinositol ceramide. The protein is Mannosyl phosphorylinositol ceramide synthase CSH1 of Saccharomyces cerevisiae (strain ATCC 204508 / S288c) (Baker's yeast).